The chain runs to 216 residues: Imidazole glycerol phosphate synthase subunit HisH (216 aa).

In terms of domain architecture, Glutamine amidotransferase type-1 spans 2-216; sequence RVAIIDYGSG…FIANFLKWKP (215 aa). Cysteine 88 acts as the Nucleophile in catalysis. Active-site residues include histidine 196 and glutamate 198.

Heterodimer of HisH and HisF.

The protein localises to the cytoplasm. It catalyses the reaction 5-[(5-phospho-1-deoxy-D-ribulos-1-ylimino)methylamino]-1-(5-phospho-beta-D-ribosyl)imidazole-4-carboxamide + L-glutamine = D-erythro-1-(imidazol-4-yl)glycerol 3-phosphate + 5-amino-1-(5-phospho-beta-D-ribosyl)imidazole-4-carboxamide + L-glutamate + H(+). The enzyme catalyses L-glutamine + H2O = L-glutamate + NH4(+). The protein operates within amino-acid biosynthesis; L-histidine biosynthesis; L-histidine from 5-phospho-alpha-D-ribose 1-diphosphate: step 5/9. Functionally, IGPS catalyzes the conversion of PRFAR and glutamine to IGP, AICAR and glutamate. The HisH subunit catalyzes the hydrolysis of glutamine to glutamate and ammonia as part of the synthesis of IGP and AICAR. The resulting ammonia molecule is channeled to the active site of HisF. This chain is Imidazole glycerol phosphate synthase subunit HisH, found in Brucella melitensis biotype 1 (strain ATCC 23456 / CCUG 17765 / NCTC 10094 / 16M).